The following is a 396-amino-acid chain: Purine ribonucleoside efflux pump NepI (396 aa).

At 1-21 the chain is on the cytoplasmic side; it reads MSEFIAENRGADAITRPNWSA. The helical transmembrane segment at 22 to 42 threads the bilayer; the sequence is VFSVAFCVACLIIVEFLPVSL. Residues 43–54 are Periplasmic-facing; that stretch reads LTPMAQDLGISE. The chain crosses the membrane as a helical span at residues 55–75; that stretch reads GVAGQSVTVTAFVAMFASLFI. Residues 76-85 lie on the Cytoplasmic side of the membrane; it reads TQTIQATDRR. The chain crosses the membrane as a helical span at residues 86-106; it reads NVVILFAVLLTLSCLLVSFAN. S107 is a topological domain (periplasmic). Residues 108-128 form a helical membrane-spanning segment; the sequence is FSLLLIGRACLGLALGGFWAM. The Cytoplasmic segment spans residues 129–147; the sequence is SASLTMRLVPPRTVPKALS. A helical transmembrane segment spans residues 148–168; sequence VIFGAVSIALVIAAPLGSFLG. At 169–175 the chain is on the periplasmic side; the sequence is ELIGWRN. Residues 176-196 traverse the membrane as a helical segment; sequence VFNAAAVMGVLCIFWIIKSLP. The Cytoplasmic segment spans residues 197 to 215; the sequence is SLPGEPSHQKQNTFRLLQR. Residues 216-236 form a helical membrane-spanning segment; the sequence is PGVMAGMIAIFMSFAGQFAFF. Topologically, residues 237–255 are periplasmic; sequence TYIRPVYMNLAGFSVDGLT. Residues 256–276 form a helical membrane-spanning segment; it reads LVLLSFGIASFIGTSLSSFIL. The Cytoplasmic segment spans residues 277 to 281; that stretch reads KRSVK. Residues 282-302 traverse the membrane as a helical segment; it reads LALAGAPLILAVSALVLTLWG. The Periplasmic portion of the chain corresponds to 303-305; the sequence is SDK. Residues 306–326 form a helical membrane-spanning segment; sequence IVATGVAIIWGLTFALVPVGW. Residues 327 to 343 are Cytoplasmic-facing; sequence STWITRSLADQAEKAGS. The chain crosses the membrane as a helical span at residues 344 to 364; that stretch reads IQVAVIQLANTCGAAIGGYAL. The Periplasmic portion of the chain corresponds to 365–366; the sequence is DN. Residues 367–387 form a helical membrane-spanning segment; it reads IGLTSPLMFSGTLMLLTALLV. Residues 388–396 are Cytoplasmic-facing; sequence TAKVKMKKS.

It belongs to the major facilitator superfamily. DHA1 family. NepI (TC 2.A.1.2.26) subfamily.

The protein resides in the cell inner membrane. It carries out the reaction inosine(in) + H(+)(out) = inosine(out) + H(+)(in). It catalyses the reaction guanosine(in) + H(+)(out) = guanosine(out) + H(+)(in). Functionally, involved in the efflux of purine ribonucleosides, such as inosine and guanosine. In Shigella sonnei (strain Ss046), this protein is Purine ribonucleoside efflux pump NepI.